Reading from the N-terminus, the 30-residue chain is Cyclotide cter-F (30 aa).

Positions 1-30 (GIPCGESCVFIPCISSVVGCSCKSKVCYLD) form a cross-link, cyclopeptide (Gly-Asp). 3 disulfide bridges follow: Cys-4–Cys-20, Cys-8–Cys-22, and Cys-13–Cys-27.

Post-translationally, contains 3 disulfide bonds. This is a cyclic peptide.

Probably participates in a plant defense mechanism. The polypeptide is Cyclotide cter-F (Clitoria ternatea (Butterfly pea)).